Here is a 278-residue protein sequence, read N- to C-terminus: 4-deoxy-L-threo-5-hexosulose-uronate ketol-isomerase (278 aa).

Zn(2+) contacts are provided by His196, His198, Glu203, and His245.

Belongs to the KduI family. In terms of assembly, homohexamer. Zn(2+) serves as cofactor.

It carries out the reaction 5-dehydro-4-deoxy-D-glucuronate = 3-deoxy-D-glycero-2,5-hexodiulosonate. It functions in the pathway glycan metabolism; pectin degradation; 2-dehydro-3-deoxy-D-gluconate from pectin: step 4/5. In terms of biological role, catalyzes the isomerization of 5-dehydro-4-deoxy-D-glucuronate to 3-deoxy-D-glycero-2,5-hexodiulosonate. The protein is 4-deoxy-L-threo-5-hexosulose-uronate ketol-isomerase of Escherichia coli (strain K12 / MC4100 / BW2952).